The following is a 207-amino-acid chain: Thymidylate kinase (207 aa).

7–14 (GCEGSGKS) serves as a coordination point for ATP.

Belongs to the thymidylate kinase family.

The enzyme catalyses dTMP + ATP = dTDP + ADP. Phosphorylation of dTMP to form dTDP in both de novo and salvage pathways of dTTP synthesis. In Chlamydia felis (strain Fe/C-56) (Chlamydophila felis), this protein is Thymidylate kinase.